We begin with the raw amino-acid sequence, 126 residues long: Small ribosomal subunit protein uS11 (126 aa).

Belongs to the universal ribosomal protein uS11 family. In terms of assembly, part of the 30S ribosomal subunit. Interacts with proteins S7 and S18. Binds to IF-3.

Its function is as follows. Located on the platform of the 30S subunit, it bridges several disparate RNA helices of the 16S rRNA. Forms part of the Shine-Dalgarno cleft in the 70S ribosome. The sequence is that of Small ribosomal subunit protein uS11 from Desulfotalea psychrophila (strain LSv54 / DSM 12343).